We begin with the raw amino-acid sequence, 219 residues long: Small ribosomal subunit protein uS3c (219 aa).

One can recognise a KH type-2 domain in the interval 39-109 (IRQYIEKNLS…QIRINVIEVK (71 aa)).

Belongs to the universal ribosomal protein uS3 family. As to quaternary structure, part of the 30S ribosomal subunit.

It is found in the plastid. The protein resides in the cyanelle. This Cyanophora paradoxa protein is Small ribosomal subunit protein uS3c (rps3).